The chain runs to 189 residues: Peptidyl-tRNA hydrolase (189 aa).

His-14 is a binding site for tRNA. Residue His-19 is the Proton acceptor of the active site. Positions 64, 66, and 112 each coordinate tRNA.

Belongs to the PTH family. Monomer.

Its subcellular location is the cytoplasm. The enzyme catalyses an N-acyl-L-alpha-aminoacyl-tRNA + H2O = an N-acyl-L-amino acid + a tRNA + H(+). Functionally, hydrolyzes ribosome-free peptidyl-tRNAs (with 1 or more amino acids incorporated), which drop off the ribosome during protein synthesis, or as a result of ribosome stalling. Catalyzes the release of premature peptidyl moieties from peptidyl-tRNA molecules trapped in stalled 50S ribosomal subunits, and thus maintains levels of free tRNAs and 50S ribosomes. This Chlorobium phaeobacteroides (strain BS1) protein is Peptidyl-tRNA hydrolase.